Consider the following 252-residue polypeptide: Imidazole glycerol phosphate synthase subunit HisF (252 aa).

Residues aspartate 11 and aspartate 130 contribute to the active site.

Belongs to the HisA/HisF family. In terms of assembly, heterodimer of HisH and HisF.

It is found in the cytoplasm. The catalysed reaction is 5-[(5-phospho-1-deoxy-D-ribulos-1-ylimino)methylamino]-1-(5-phospho-beta-D-ribosyl)imidazole-4-carboxamide + L-glutamine = D-erythro-1-(imidazol-4-yl)glycerol 3-phosphate + 5-amino-1-(5-phospho-beta-D-ribosyl)imidazole-4-carboxamide + L-glutamate + H(+). It functions in the pathway amino-acid biosynthesis; L-histidine biosynthesis; L-histidine from 5-phospho-alpha-D-ribose 1-diphosphate: step 5/9. In terms of biological role, IGPS catalyzes the conversion of PRFAR and glutamine to IGP, AICAR and glutamate. The HisF subunit catalyzes the cyclization activity that produces IGP and AICAR from PRFAR using the ammonia provided by the HisH subunit. The chain is Imidazole glycerol phosphate synthase subunit HisF from Halothermothrix orenii (strain H 168 / OCM 544 / DSM 9562).